A 201-amino-acid polypeptide reads, in one-letter code: Probable GTP-binding protein EngB (201 aa).

An EngB-type G domain is found at 21–191 (PEAQIALAGR…WQELARAAGV (171 aa)). Residues 29 to 36 (GRSNVGKS), 56 to 60 (GKTRS), 75 to 78 (DLPG), 142 to 145 (TKAD), and 168 to 172 (VLTSS) contribute to the GTP site. Positions 36 and 58 each coordinate Mg(2+).

This sequence belongs to the TRAFAC class TrmE-Era-EngA-EngB-Septin-like GTPase superfamily. EngB GTPase family. The cofactor is Mg(2+).

Its function is as follows. Necessary for normal cell division and for the maintenance of normal septation. The polypeptide is Probable GTP-binding protein EngB (Desulfovibrio desulfuricans (strain ATCC 27774 / DSM 6949 / MB)).